The following is a 205-amino-acid chain: Regulator of G-protein signaling 4 (205 aa).

3 S-palmitoyl cysteine lipidation sites follow: C2, C12, and C95. One can recognise an RGS domain in the interval 62 to 178 (SLENLISHEC…LKSRFYLDLV (117 aa)).

Palmitoylated on Cys-2 and/or Cys-12. Post-translationally, phosphorylated by cyclic GMP-dependent protein kinase.

Inhibits signal transduction by increasing the GTPase activity of G protein alpha subunits thereby driving them into their inactive GDP-bound form. Activity on G(z)-alpha is inhibited by phosphorylation of the G-protein. Activity on G(z)-alpha and G(i)-alpha-1 is inhibited by palmitoylation of the G-protein. The protein is Regulator of G-protein signaling 4 (RGS4) of Bos taurus (Bovine).